The sequence spans 349 residues: Dihydroorotate dehydrogenase (quinone) (349 aa).

FMN-binding positions include 67–71 and threonine 91; that span reads AGLDK. Lysine 71 contacts substrate. Residue 116–120 participates in substrate binding; it reads NRLGF. FMN is bound by residues asparagine 147 and asparagine 180. Asparagine 180 contacts substrate. Serine 183 (nucleophile) is an active-site residue. Residue asparagine 185 participates in substrate binding. Lysine 225 and threonine 253 together coordinate FMN. 254-255 lines the substrate pocket; it reads NT. FMN-binding positions include glycine 276, glycine 305, and 326 to 327; that span reads YT.

Belongs to the dihydroorotate dehydrogenase family. Type 2 subfamily. In terms of assembly, monomer. FMN is required as a cofactor.

The protein localises to the cell membrane. The enzyme catalyses (S)-dihydroorotate + a quinone = orotate + a quinol. It functions in the pathway pyrimidine metabolism; UMP biosynthesis via de novo pathway; orotate from (S)-dihydroorotate (quinone route): step 1/1. In terms of biological role, catalyzes the conversion of dihydroorotate to orotate with quinone as electron acceptor. The protein is Dihydroorotate dehydrogenase (quinone) of Bordetella pertussis (strain Tohama I / ATCC BAA-589 / NCTC 13251).